We begin with the raw amino-acid sequence, 267 residues long: tRNA pseudouridine synthase A (267 aa).

Asp51 functions as the Nucleophile in the catalytic mechanism. Tyr109 lines the substrate pocket.

This sequence belongs to the tRNA pseudouridine synthase TruA family. Homodimer.

The catalysed reaction is uridine(38/39/40) in tRNA = pseudouridine(38/39/40) in tRNA. Functionally, formation of pseudouridine at positions 38, 39 and 40 in the anticodon stem and loop of transfer RNAs. This Staphylococcus aureus (strain USA300) protein is tRNA pseudouridine synthase A.